A 50-amino-acid polypeptide reads, in one-letter code: Sproutin (50 aa).

A Phosphoserine; by PKC modification is found at Ser8.

In terms of tissue distribution, brain.

Its function is as follows. Neurite outgrowth factor. The sequence is that of Sproutin from Rattus norvegicus (Rat).